We begin with the raw amino-acid sequence, 482 residues long: Glutamate synthase [NADPH] small chain (482 aa).

In terms of domain architecture, 4Fe-4S ferredoxin-type spans 39–72 (ERANEQANRCSQCGVPFCQVHCPVSNNIPDWLKL). Residues cysteine 95, cysteine 99, cysteine 105, and cysteine 109 each coordinate [4Fe-4S] cluster.

Aggregate of 4 catalytic active heterodimers, consisting of a large and a small subunit. It depends on [4Fe-4S] cluster as a cofactor.

It catalyses the reaction 2 L-glutamate + NADP(+) = L-glutamine + 2-oxoglutarate + NADPH + H(+). It participates in amino-acid biosynthesis; L-glutamate biosynthesis via GLT pathway; L-glutamate from 2-oxoglutarate and L-glutamine (NADP(+) route): step 1/1. It functions in the pathway energy metabolism; nitrogen metabolism. The sequence is that of Glutamate synthase [NADPH] small chain (gltD) from Azospirillum brasilense.